A 489-amino-acid polypeptide reads, in one-letter code: Protein SOF1 (489 aa).

WD repeat units lie at residues glycine 65 to serine 105, valine 113 to lysine 158, aspartate 177 to aspartate 214, tryptophan 217 to lysine 257, valine 259 to asparagine 299, aspartate 303 to isoleucine 342, and lysine 346 to valine 385. Basic and acidic residues-rich tracts occupy residues arginine 440–lysine 459 and histidine 466–lysine 489. Residues arginine 440–lysine 489 are disordered.

This sequence belongs to the WD repeat DCAF13/WDSOF1 family. Interacts with snoRNA U3. Interacts with NOP1 and MPP10. Component of the ribosomal small subunit (SSU) processome composed of at least 40 protein subunits and snoRNA U3.

Its subcellular location is the nucleus. It localises to the nucleolus. In terms of biological role, required for ribosomal RNA processing. This Saccharomyces cerevisiae (strain ATCC 204508 / S288c) (Baker's yeast) protein is Protein SOF1 (SOF1).